The primary structure comprises 252 residues: MAVGKNKRLSKGKKGIKKRVVDPFSRKEWYDIKAPAFFEVKNVGKTLVNRTAGLKNANDSLKGRILEVSLADLQKDEEHAFRKVKLRVEDIQGKSCLTSFNGLSITSDKLRSLVRKWQTTIEADQTIKTTDGYLCRVFVIGFTRRRANQVKKTTYAQSSQIRAIRQKMFQVIQNQTSSCSMRELVQKLIPEVIGREIERATGSIFPLQNVLVRKVKILKAPKHDAQKLLELHGESQDVGTKVVKDVAPLESV.

Position 2 is an N-acetylalanine; partial (Ala-2). The residue at position 251 (Ser-251) is a Phosphoserine.

This sequence belongs to the eukaryotic ribosomal protein eS1 family. In terms of assembly, component of the small ribosomal subunit (SSU). Mature yeast ribosomes consist of a small (40S) and a large (60S) subunit. The 40S small subunit contains 1 molecule of ribosomal RNA (18S rRNA) and at least 33 different proteins. The large 60S subunit contains 3 rRNA molecules (25S, 5.8S and 5S rRNA) and at least 46 different proteins. eS1 interacts directly with uS11 and eS26, which form part of the mRNA exit tunnel.

It is found in the cytoplasm. Functionally, component of the ribosome, a large ribonucleoprotein complex responsible for the synthesis of proteins in the cell. The small ribosomal subunit (SSU) binds messenger RNAs (mRNAs) and translates the encoded message by selecting cognate aminoacyl-transfer RNA (tRNA) molecules. The large subunit (LSU) contains the ribosomal catalytic site termed the peptidyl transferase center (PTC), which catalyzes the formation of peptide bonds, thereby polymerizing the amino acids delivered by tRNAs into a polypeptide chain. The nascent polypeptides leave the ribosome through a tunnel in the LSU and interact with protein factors that function in enzymatic processing, targeting, and the membrane insertion of nascent chains at the exit of the ribosomal tunnel. This is Small ribosomal subunit protein eS1B (rps102) from Schizosaccharomyces pombe (strain 972 / ATCC 24843) (Fission yeast).